The sequence spans 65 residues: Carboxypeptidase A inhibitor (65 aa).

It belongs to the protease inhibitor I44 family.

It is found in the secreted. Functionally, inhibits carboxypeptidase A. The chain is Carboxypeptidase A inhibitor from Ascaris suum (Pig roundworm).